Consider the following 943-residue polypeptide: Aconitate hydratase A (943 aa).

[4Fe-4S] cluster contacts are provided by Cys479, Cys545, and Cys548.

The protein belongs to the aconitase/IPM isomerase family. Monomer. [4Fe-4S] cluster serves as cofactor.

The enzyme catalyses citrate = D-threo-isocitrate. It catalyses the reaction (2S,3R)-3-hydroxybutane-1,2,3-tricarboxylate = 2-methyl-cis-aconitate + H2O. It functions in the pathway carbohydrate metabolism; tricarboxylic acid cycle; isocitrate from oxaloacetate: step 2/2. It participates in organic acid metabolism; propanoate degradation. Its function is as follows. Involved in the catabolism of short chain fatty acids (SCFA) via the tricarboxylic acid (TCA)(acetyl degradation route) and probably via the 2-methylcitrate cycle I (propionate degradation route). Catalyzes the reversible isomerization of citrate to isocitrate via cis-aconitate. The apo form of AcnA functions as a RNA-binding regulatory protein which binds to selected IRE-like sequences present within the UTRs (untranslated regions) of 3' trxC and 5' IdeR mRNA. Could catalyze the hydration of 2-methyl-cis-aconitate to yield (2R,3S)-2-methylisocitrate. The chain is Aconitate hydratase A (acn) from Mycobacterium tuberculosis (strain ATCC 25618 / H37Rv).